The primary structure comprises 65 residues: Photosystem II reaction center protein Z (65 aa).

2 helical membrane passes run 8–28 (AVFALVLLSFVLIVAVPVALA) and 41–61 (YAGAALWTSLIIVIGVLDSVV).

It belongs to the PsbZ family. In terms of assembly, PSII is composed of 1 copy each of membrane proteins PsbA, PsbB, PsbC, PsbD, PsbE, PsbF, PsbH, PsbI, PsbJ, PsbK, PsbL, PsbM, PsbT, PsbX, PsbY, PsbZ, Psb30/Ycf12, at least 3 peripheral proteins of the oxygen-evolving complex and a large number of cofactors. It forms dimeric complexes.

It is found in the plastid. Its subcellular location is the cyanelle thylakoid membrane. May control the interaction of photosystem II (PSII) cores with the light-harvesting antenna, regulates electron flow through the 2 photosystem reaction centers. PSII is a light-driven water plastoquinone oxidoreductase, using light energy to abstract electrons from H(2)O, generating a proton gradient subsequently used for ATP formation. The chain is Photosystem II reaction center protein Z from Cyanophora paradoxa.